Here is a 134-residue protein sequence, read N- to C-terminus: MESFVAMKVVCITVLFVIVAVNESATSEARTSSAAKETKKKNVTLHFPSYIRNPQKLALELLEICKNNKSRNSLPSTNYSAINDKYVDFKNCTFLCKHAEDRNVTLDLPPNTLCGPNGETCAEKSKCVGHIPGC.

The signal sequence occupies residues 1 to 21 (MESFVAMKVVCITVLFVIVAV). Asn-22 carries N-linked (GlcNAc...) asparagine glycosylation. The interval 48-67 (PSYIRNPQKLALELLEICKN) is required for Borrelia OspC-binding. Asn-91 and Asn-103 each carry an N-linked (GlcNAc...) asparagine glycan. Positions 115–134 (GPNGETCAEKSKCVGHIPGC) are CD4-binding.

The protein belongs to the salp15 family. Monomer. Interacts with host CD4. Interacts with host DC-SIGN (CD209). In terms of assembly, (Microbial infection) Interacts with Borrelia outer surface protein C (OspC). As to expression, expressed in salivary glands. Detected in fed adult female.

The protein resides in the secreted. Salivary tick protein that downregulates host immune system by binding to both dendritic cells, and CD4(+) T cells. Specifically binds to the CD4 coreceptor on T cells. This interaction prevents the activation of the Src kinase, Lck, and its downstream substrate Zap-70, and results in deficient activation of PLCgamma1, the repression of calcium fluxes triggered by T-cell antigen receptor (TCR) ligation, and a subsequent reduction in interleukin-2 production. This salivary protein also binds to DC-SIGN (CD209) on dendritic cells (DC) and activates the Raf-1 kinase/MEK signaling pathway that results in down-regulating expression of pro-inflammatory cytokines. Furthermore, it inhibits T cell proliferation induced by DCs. In addition, it inhibits in vitro keratinocyte inflammation induced by Borrelia burgdorferi or by the major outer surface protein (OspC) of Borrelia. In addition, it downregulates chemokines and monocyte chemoattractant protein 1, as well as several antimicrobial peptides such as defensins, cathelicidin, psoriasin, and RNase 7. Apart from its immunomodulatory activities, it is also associated with protection of Borrelia spirochetes from antibody-mediated killing through its binding to OspC. In vivo, tests on different immune disease animal models show promising therapeutic results, e.g., in inhibiting HIV infection, experimental autoimmune encephalomyelitis, transplantation rejection, and asthma. In terms of biological role, (Microbial infection) Protects Borrelia garinii (strain VSBP) from host complement-mediated killing by binding to the surface of spirochetes and preventing deposition of host C5b-9 membrane attack complexes. Protects Borrelia garinii (strain A87S) from host complement-mediated killing. Functionally, (Microbial infection) Partially protects Borrelia burgdorferi (strains VS215 and B31) from host complement-mediated killing. The sequence is that of Salivary protein 15 Iric-1 from Ixodes ricinus (Common tick).